Consider the following 85-residue polypeptide: Small ribosomal subunit protein bS18 (85 aa).

It belongs to the bacterial ribosomal protein bS18 family. Part of the 30S ribosomal subunit. Forms a tight heterodimer with protein bS6.

Its function is as follows. Binds as a heterodimer with protein bS6 to the central domain of the 16S rRNA, where it helps stabilize the platform of the 30S subunit. The chain is Small ribosomal subunit protein bS18 from Helicobacter acinonychis (strain Sheeba).